Here is a 513-residue protein sequence, read N- to C-terminus: Solute carrier family 2, facilitated glucose transporter member 10 (513 aa).

Topologically, residues 1 to 6 (MGCSVL) are cytoplasmic. The chain crosses the membrane as a helical span at residues 7–27 (LLTITVSTLGGLVFGYELGII). Residues 28–46 (SGALPQLQTHFSLGCVQQE) are Extracellular-facing. Residues 47–67 (AVVSALLIGSLFASIIGGWLI) form a helical membrane-spanning segment. Over 68-80 (DRHGRRTSILLSN) the chain is Cytoplasmic. Residues 81–101 (LLILAGSVILTTGTSFFALVI) form a helical membrane-spanning segment. Residues 102-104 (GRA) are Extracellular-facing. A helical membrane pass occupies residues 105–125 (VIGFAMTVSSMSCCIFVSEMV). Residues 126 to 130 (TPERR) are Cytoplasmic-facing. A helical membrane pass occupies residues 131-151 (GLMVTLYEVGITVGILIAYAV). Residues 152–164 (NYIFNNVPLTGWR) lie on the Extracellular side of the membrane. A helical transmembrane segment spans residues 165–185 (YMFGFAIIPSLIQLASIVLLP). The Cytoplasmic portion of the chain corresponds to 186–236 (KQAEVFVIHDDDSRQADRLTEETETSNQHQQSEKYGVSDLFKSKDNMRRRT). The chain crosses the membrane as a helical span at residues 237-257 (VIGVGLVLSQQFTGQPNVLFY). 246–247 (QQ) is a D-glucose binding site. Over 258–272 (ASTILFSVGFQSNAS) the chain is Extracellular. N-linked (GlcNAc...) asparagine glycosylation occurs at N270. A helical membrane pass occupies residues 273 to 293 (AILASVGFGIVKVIATLLAML). Residues 294-301 (CSDRAGRR) are Cytoplasmic-facing. Residues 302–322 (SLLIGGCSMLAVGLILTGFLC) form a helical membrane-spanning segment. The Extracellular portion of the chain corresponds to 323-376 (RQSVIDTTKRCTSVGPHSNLTLSAEHDEGVGFSSQTLDVHEHLRSFSQSEDIYK). Residue N341 is glycosylated (N-linked (GlcNAc...) asparagine). A helical transmembrane segment spans residues 377-397 (WIIFTCLMAVVSAFSVSFGPM). The Cytoplasmic portion of the chain corresponds to 398 to 422 (TWVVLSEIFPKDIRGRAFSFINCFN). A D-glucose-binding site is contributed by W399. Transmembrane regions (helical) follow at residues 423-443 (VGAN…IGLS) and 444-464 (GVFL…YLVL). Residues 465-513 (PETKGKSLQDIDRELSQTRMIHRQELCSIFQRRRFSPGYQRVQLTSTAT) lie on the Cytoplasmic side of the membrane.

It belongs to the major facilitator superfamily. Sugar transporter (TC 2.A.1.1) family. Glucose transporter subfamily.

The protein resides in the endomembrane system. The protein localises to the cytoplasm. It localises to the perinuclear region. The enzyme catalyses D-glucose(out) = D-glucose(in). Functionally, facilitative glucose transporter required for the development of the cardiovascular system. The sequence is that of Solute carrier family 2, facilitated glucose transporter member 10 from Danio rerio (Zebrafish).